The sequence spans 247 residues: Orotidine 5'-phosphate decarboxylase (247 aa).

Residues aspartate 16, lysine 38, 66-75 (DLKFHDIPNT), threonine 130, arginine 191, glutamine 200, glycine 220, and arginine 221 contribute to the substrate site. The active-site Proton donor is the lysine 68.

It belongs to the OMP decarboxylase family. Type 1 subfamily. Homodimer.

It carries out the reaction orotidine 5'-phosphate + H(+) = UMP + CO2. It participates in pyrimidine metabolism; UMP biosynthesis via de novo pathway; UMP from orotate: step 2/2. Its function is as follows. Catalyzes the decarboxylation of orotidine 5'-monophosphate (OMP) to uridine 5'-monophosphate (UMP). The protein is Orotidine 5'-phosphate decarboxylase of Rhodospirillum rubrum (strain ATCC 11170 / ATH 1.1.1 / DSM 467 / LMG 4362 / NCIMB 8255 / S1).